We begin with the raw amino-acid sequence, 657 residues long: Probable cobalt/nickel-exporting P-type ATPase (657 aa).

A run of 5 helical transmembrane segments spans residues 40–60, 62–82, 101–121, 268–288, and 299–319; these read WATV…NGAP, AMWW…SAWA, AAVG…IVIF, LGMV…GADL, and MIVA…LSAI. The 4-aspartylphosphate intermediate role is filled by aspartate 347. Aspartate 543 and aspartate 547 together coordinate Mg(2+). The chain crosses the membrane as a helical span at residues 596 to 618; sequence VVTVNLAIAATFIAVLVLWDLFG.

Belongs to the cation transport ATPase (P-type) (TC 3.A.3) family. Type IB subfamily.

The protein localises to the cell membrane. Involved in heavy metal homeostasis. Probably exports nickel and cobalt ions out of the cell. The protein is Probable cobalt/nickel-exporting P-type ATPase (ctpD) of Mycobacterium bovis (strain ATCC BAA-935 / AF2122/97).